The primary structure comprises 308 residues: Phosphoribosylaminoimidazole-succinocarboxamide synthase (308 aa).

It belongs to the SAICAR synthetase family.

It catalyses the reaction 5-amino-1-(5-phospho-D-ribosyl)imidazole-4-carboxylate + L-aspartate + ATP = (2S)-2-[5-amino-1-(5-phospho-beta-D-ribosyl)imidazole-4-carboxamido]succinate + ADP + phosphate + 2 H(+). The protein operates within purine metabolism; IMP biosynthesis via de novo pathway; 5-amino-1-(5-phospho-D-ribosyl)imidazole-4-carboxamide from 5-amino-1-(5-phospho-D-ribosyl)imidazole-4-carboxylate: step 1/2. The sequence is that of Phosphoribosylaminoimidazole-succinocarboxamide synthase from Xylella fastidiosa (strain 9a5c).